The chain runs to 326 residues: Tryptophan--tRNA ligase (326 aa).

ATP-binding positions include 11–13 (QPT) and 19–20 (GN). The 'HIGH' region signature appears at 12 to 20 (PTGQIHLGN). Residue Asp135 participates in L-tryptophan binding. Residues 147-149 (GED), Val186, and 195-199 (KMSKS) each bind ATP. Residues 195 to 199 (KMSKS) carry the 'KMSKS' region motif.

Belongs to the class-I aminoacyl-tRNA synthetase family. As to quaternary structure, homodimer.

The protein localises to the cytoplasm. The enzyme catalyses tRNA(Trp) + L-tryptophan + ATP = L-tryptophyl-tRNA(Trp) + AMP + diphosphate + H(+). Catalyzes the attachment of tryptophan to tRNA(Trp). The chain is Tryptophan--tRNA ligase from Helicobacter pylori (strain ATCC 700392 / 26695) (Campylobacter pylori).